Here is a 337-residue protein sequence, read N- to C-terminus: MTQENEIKRPIQDLEHEPIKPLDNSEKGSKVSQALETVTTTAEKVQRQPVIAHLIRATERFNDRLGNQFGAAITYFSFLSMIPILMVSFAAGGFVLASHPMLLQDIFDKILQNISDPTLAATLKNTINTAVQQRTTVGLVGLAVALYSGINWMGNLREAIRAQSRDVWERSPQDQEKFWVKYLRDFISLIGLLIALIVTLSITSVAGSAQQMIISALHLNSIEWLKPTWRLIGLAISIFANYLLFFWIFWRLPRHRPRKKALIRGTFLAAIGFEVIKIVMTYTLPSLMKSPSGAAFGSVLGLMAFFYFFARLTLFCAAWIATAEYKDDPRMPGKTQP.

Positions 1–29 (MTQENEIKRPIQDLEHEPIKPLDNSEKGS) are enriched in basic and acidic residues. Residues 1 to 31 (MTQENEIKRPIQDLEHEPIKPLDNSEKGSKV) are disordered. The Cytoplasmic segment spans residues 1-74 (MTQENEIKRP…LGNQFGAAIT (74 aa)). A helical membrane pass occupies residues 75-97 (YFSFLSMIPILMVSFAAGGFVLA). The Periplasmic portion of the chain corresponds to 98-133 (SHPMLLQDIFDKILQNISDPTLAATLKNTINTAVQQ). The helical transmembrane segment at 134–156 (RTTVGLVGLAVALYSGINWMGNL) threads the bilayer. Topologically, residues 157–185 (REAIRAQSRDVWERSPQDQEKFWVKYLRD) are cytoplasmic. A helical membrane pass occupies residues 186 to 208 (FISLIGLLIALIVTLSITSVAGS). At 209–227 (AQQMIISALHLNSIEWLKP) the chain is on the periplasmic side. The helical transmembrane segment at 228-250 (TWRLIGLAISIFANYLLFFWIFW) threads the bilayer. The Cytoplasmic segment spans residues 251–261 (RLPRHRPRKKA). The helical transmembrane segment at 262 to 284 (LIRGTFLAAIGFEVIKIVMTYTL) threads the bilayer. At 285 to 298 (PSLMKSPSGAAFGS) the chain is on the periplasmic side. Residues 299 to 321 (VLGLMAFFYFFARLTLFCAAWIA) traverse the membrane as a helical segment. The Cytoplasmic portion of the chain corresponds to 322 to 337 (TAEYKDDPRMPGKTQP).

It localises to the cell inner membrane. The polypeptide is Inner membrane protein YhjD (yhjD) (Escherichia coli (strain K12)).